Reading from the N-terminus, the 319-residue chain is Carbonic anhydrase 6 (319 aa).

Positions 1 to 14 (MITLLFLLVVGAQA) are cleaved as a signal peptide. An Alpha-carbonic anhydrase domain is found at 16–273 (HEWTYSEGVL…LNHRVVEANF (258 aa)). Cysteine 37 and cysteine 219 form a disulfide bridge. Asparagine 62 is a glycosylation site (N-linked (GlcNAc...) asparagine). The active-site Proton donor/acceptor is the histidine 80. Residues histidine 106, histidine 108, and histidine 133 each contribute to the Zn(2+) site. 215 to 216 (TT) is a substrate binding site. Asparagine 251 carries an N-linked (GlcNAc...) asparagine glycan.

This sequence belongs to the alpha-carbonic anhydrase family. Requires Zn(2+) as cofactor. Major constituent of saliva.

It localises to the secreted. The catalysed reaction is hydrogencarbonate + H(+) = CO2 + H2O. Its function is as follows. Reversible hydration of carbon dioxide. Its role in saliva is unknown. This Bos taurus (Bovine) protein is Carbonic anhydrase 6 (CA6).